The following is a 745-amino-acid chain: MFPLRALWLVWALLGVAGSCPEPCACVDKYAHQFADCAYKELREVPEGLPANVTTLSLSANKITVLRRGAFADVTQVTSLWLAHNEVRTVEPGALAVLSQLKNLDLSHNFISSFPWSDLRNLSALQLLKMNHNRLGSLPRDALGALPDLRSLRINNNRLRTLAPGTFDALSALSHLQLYHNPFHCGCGLVWLQAWAASTRVSLPEPDSIACASPPALQGVPVYRLPALPCAPPSVHLSAEPPLEAPGTPLRAGLAFVLHCIADGHPTPRLQWQLQIPGGTVVLEPPVLSGEDDGVGAEEGEGEGDGDLLTQTQAQTPTPAPAWPAPPATPRFLALANGSLLVPLLSAKEAGVYTCRAHNELGANSTSIRVAVAATGPPKHAPGAGGEPDGQAPTSERKSTAKGRGNSVLPSKPEGKIKGQGLAKVSILGETETEPEEDTSEGEEAEDQILADPAEEQRCGNGDPSRYVSNHAFNQSAELKPHVFELGVIALDVAEREARVQLTPLAARWGPGPGGAGGAPRPGRRPLRLLYLCPAGGGAAVQWSRVEEGVNAYWFRGLRPGTNYSVCLALAGEACHVQVVFSTKKELPSLLVIVAVSVFLLVLATVPLLGAACCHLLAKHPGKPYRLILRPQAPDPMEKRIAADFDPRASYLESEKSYPAGGEAGGEEPEDVQGEGLDEDAEQGDPSGDLQREESLAACSLVESQSKANQEEFEAGSEYSDRLPLGAEAVNIAQEINGNYRQTAG.

The N-terminal stretch at 1–18 is a signal peptide; that stretch reads MFPLRALWLVWALLGVAG. The 33-residue stretch at 19–51 folds into the LRRNT domain; sequence SCPEPCACVDKYAHQFADCAYKELREVPEGLPA. Over 19–589 the chain is Extracellular; the sequence is SCPEPCACVD…VFSTKKELPS (571 aa). Asparagine 52 carries an N-linked (GlcNAc...) asparagine glycan. LRR repeat units lie at residues 52 to 73, 76 to 97, 100 to 123, 124 to 145, and 148 to 169; these read NVTTLSLSANKITVLRRGAFAD, QVTSLWLAHNEVRTVEPGALAV, QLKNLDLSHNFISSFPWSDLRNLS, ALQLLKMNHNRLGSLPRDALGA, and DLRSLRINNNRLRTLAPGTFDA. The N-linked (GlcNAc...) asparagine glycan is linked to asparagine 121. The LRRCT domain occupies 181–232; the sequence is NPFHCGCGLVWLQAWAASTRVSLPEPDSIACASPPALQGVPVYRLPALPCAP. An Ig-like domain is found at 233-371; sequence PSVHLSAEPP…GANSTSIRVA (139 aa). A disulfide bond links cysteine 260 and cysteine 355. Residues 287–326 are disordered; sequence VLSGEDDGVGAEEGEGEGDGDLLTQTQAQTPTPAPAWPAP. A compositionally biased stretch (acidic residues) spans 290–306; the sequence is GEDDGVGAEEGEGEGDG. Residues asparagine 337 and asparagine 364 are each glycosylated (N-linked (GlcNAc...) asparagine). The interval 375–466 is disordered; sequence TGPPKHAPGA…QRCGNGDPSR (92 aa). Positions 431–449 are enriched in acidic residues; sequence TETEPEEDTSEGEEAEDQI. 2 N-linked (GlcNAc...) asparagine glycosylation sites follow: asparagine 474 and asparagine 563. The helical transmembrane segment at 590 to 610 threads the bilayer; it reads LLVIVAVSVFLLVLATVPLLG. Residues 611 to 745 are Cytoplasmic-facing; the sequence is AACCHLLAKH…INGNYRQTAG (135 aa). The disordered stretch occupies residues 656-722; that stretch reads KSYPAGGEAG…FEAGSEYSDR (67 aa). A compositionally biased stretch (acidic residues) spans 665-683; sequence GGEEPEDVQGEGLDEDAEQ. The residue at position 719 (tyrosine 719) is a Phosphotyrosine. The residue at position 720 (serine 720) is a Phosphoserine.

Homomultimer. Interacts with NTRK1/TrkA.

Its subcellular location is the cell membrane. Its function is as follows. Required for axon extension during neural development. In Homo sapiens (Human), this protein is Immunoglobulin superfamily containing leucine-rich repeat protein 2 (ISLR2).